The chain runs to 142 residues: Large ribosomal subunit protein uL13 (142 aa).

The protein belongs to the universal ribosomal protein uL13 family. Part of the 50S ribosomal subunit.

This protein is one of the early assembly proteins of the 50S ribosomal subunit, although it is not seen to bind rRNA by itself. It is important during the early stages of 50S assembly. In Haemophilus influenzae (strain 86-028NP), this protein is Large ribosomal subunit protein uL13.